The primary structure comprises 328 residues: MAVNGASSSGLIVSFGEMLIDFVPTVSGVSLAEAPGFLKAPGGAPANVAIAVTRLGGKSAFVGKLGDDEFGHMLAGILKTNGVQAEGINFDKGARTALAFVTLRADGEREFMFYRNPSADMLLTPAELNLDLIRSAKVFHYGSISLIVEPCRAAHMKAMEVAKEAGALLSYDPNLRLPLWPSAEEAKKQIKSIWDSADVIKVSDVELEFLTGSNKIDDESAMSLWHPNLKLLLVTLGEKGCNYYTKKFHGTVGGFHVKTVDTTGAGDSFVGALLTKIVDDQTILEDEARLKEVLRFSCACGAITTTKKGAIPALPTASEALTLLKGGA.

Belongs to the carbohydrate kinase PfkB family.

It catalyses the reaction D-fructose + ATP = D-fructose 6-phosphate + ADP + H(+). Its pathway is glycan biosynthesis; starch biosynthesis. May play an important role in maintaining the flux of carbon towards starch formation. This chain is Fructokinase-2 (FRK2), found in Solanum lycopersicum (Tomato).